We begin with the raw amino-acid sequence, 296 residues long: Probable endonuclease 4 (296 aa).

Residues histidine 69, histidine 109, glutamate 160, aspartate 194, histidine 197, histidine 231, aspartate 244, histidine 246, and glutamate 276 each coordinate Zn(2+).

The protein belongs to the AP endonuclease 2 family. Zn(2+) is required as a cofactor.

The catalysed reaction is Endonucleolytic cleavage to 5'-phosphooligonucleotide end-products.. Endonuclease IV plays a role in DNA repair. It cleaves phosphodiester bonds at apurinic or apyrimidinic (AP) sites, generating a 3'-hydroxyl group and a 5'-terminal sugar phosphate. The polypeptide is Probable endonuclease 4 (Sulfurovum sp. (strain NBC37-1)).